The primary structure comprises 249 residues: Phosphate import ATP-binding protein PstB 2 (249 aa).

The ABC transporter domain occupies 4 to 244 (FEVTHLNLFY…PKDHRTQGYV (241 aa)). 36–43 (GPSGCGKS) contacts ATP.

The protein belongs to the ABC transporter superfamily. Phosphate importer (TC 3.A.1.7) family. The complex is composed of two ATP-binding proteins (PstB), two transmembrane proteins (PstC and PstA) and a solute-binding protein (PstS).

It localises to the cell inner membrane. It catalyses the reaction phosphate(out) + ATP + H2O = ADP + 2 phosphate(in) + H(+). Functionally, part of the ABC transporter complex PstSACB involved in phosphate import. Responsible for energy coupling to the transport system. In Shewanella oneidensis (strain ATCC 700550 / JCM 31522 / CIP 106686 / LMG 19005 / NCIMB 14063 / MR-1), this protein is Phosphate import ATP-binding protein PstB 2.